We begin with the raw amino-acid sequence, 2028 residues long: Pecanex-like protein 3 (2028 aa).

2 helical membrane-spanning segments follow: residues 33–53 and 54–74; these read CFHL…YMVL and PPSL…FATI. An N-linked (GlcNAc...) asparagine glycan is attached at N95. Positions 96–116 are disordered; it reads STMGEQEEEAAQGESSLPRDP. S127 bears the Phosphoserine mark. Position 129 is a phosphothreonine (T129). Disordered regions lie at residues 193–239 and 263–625; these read IGDL…PMSP and LVRT…SHSR. The span at 198–208 shows a compositional bias: pro residues; the sequence is QTPPGVVPDPS. 2 stretches are compositionally biased toward basic and acidic residues: residues 263 to 273 and 305 to 319; these read LVRTSSRREQC and TDRE…EKTN. The N-linked (GlcNAc...) asparagine glycan is linked to N319. T370 is modified (phosphothreonine). Residues S392 and S431 each carry the phosphoserine modification. A compositionally biased stretch (polar residues) spans 427–437; sequence GSELSPASSLR. The segment covering 444 to 459 has biased composition (low complexity); sequence TDSSSSTSCYSPESSQ. Positions 488–497 are enriched in polar residues; sequence TQRTPSTASA. Phosphoserine occurs at positions 505 and 521. The next 7 membrane-spanning stretches (helical) occupy residues 793-815, 819-836, 852-872, 880-900, 903-923, 946-968, and 980-1000; these read NIFG…LKGF, IWVF…YSLL, WVIA…IWLL, PFPP…FFCA, VATV…LPQV, SPLT…YGFC, and HVPV…YHLS. S1025 carries the phosphoserine modification. The next 4 membrane-spanning stretches (helical) occupy residues 1053 to 1073, 1078 to 1098, 1244 to 1264, and 1280 to 1300; these read LVMC…TVFI, VLGF…HYLL, FVLT…HAFA, and LLSG…VFIM. S1697 carries the post-translational modification Phosphoserine. N1770 carries N-linked (GlcNAc...) asparagine glycosylation. Residues 1845-2028 form a disordered region; sequence GLTSLSNHPP…AAQPLLEHQY (184 aa). Residues 1890–1921 are compositionally biased toward pro residues; the sequence is RPPPLLQWPPPRLPGPPPASPAPTEGPRPSRP. Phosphoserine occurs at positions 1909 and 1955. Residues 1966–1977 show a composition bias toward low complexity; it reads PLDLSLSPDVSS. The segment covering 1978–1987 has biased composition (polar residues); the sequence is EASPARTTQD.

Belongs to the pecanex family.

The protein resides in the membrane. This is Pecanex-like protein 3 from Mus musculus (Mouse).